The following is a 505-amino-acid chain: GMP synthase [glutamine-hydrolyzing] (505 aa).

Residues 3–190 (KVLVVNFGGQ…LRKIARISDV (188 aa)) form the Glutamine amidotransferase type-1 domain. Catalysis depends on Cys80, which acts as the Nucleophile. Catalysis depends on residues His164 and Glu166. Residues 191–380 (WRPEDQITRI…LGLPEDVVYR (190 aa)) form the GMPS ATP-PPase domain. ATP is bound at residue 218-224 (SGGVDST).

It carries out the reaction XMP + L-glutamine + ATP + H2O = GMP + L-glutamate + AMP + diphosphate + 2 H(+). It functions in the pathway purine metabolism; GMP biosynthesis; GMP from XMP (L-Gln route): step 1/1. In terms of biological role, catalyzes the synthesis of GMP from XMP. The sequence is that of GMP synthase [glutamine-hydrolyzing] from Pyrobaculum aerophilum (strain ATCC 51768 / DSM 7523 / JCM 9630 / CIP 104966 / NBRC 100827 / IM2).